The chain runs to 313 residues: CBK1 kinase activator protein MOB2 (313 aa).

The interval 1–109 is disordered; the sequence is MSFLNTIRGL…KRSSIQTTKS (109 aa). Residues 23-69 are compositionally biased toward polar residues; it reads PSNNAIYSHSNLSGNGLRRTQSPTKFSPSKLSSKGAQGSAAYTSSPT. Phosphoserine; by CDC28 occurs at positions 44, 51, 67, and 97. Over residues 76 to 97 the composition is skewed to low complexity; it reads QSLQHQDSQSSLQYQQQSGSVS. The span at 98-109 shows a compositional bias: polar residues; it reads PSKRSSIQTTKS.

The protein belongs to the MOB1/phocein family. In terms of assembly, interacts with protein kinase CBK1 to form the RAM CBK1-MOB2 kinase complex. In terms of processing, phosphorylated by CDC28 at Ser-44, Ser-51, Ser-67, and Ser-97. Phosphorylation occurs during bud emergence and is maintained until the G2/M transition. Dephosphorylated at the end of mitosis. Phosphorylation is required for the maintenance of polarisome components in hyphae.

It is found in the nucleus. The protein resides in the cytoplasm. In terms of biological role, functions as an activator subunit for the CBK1 protein kinase. Part of the regulation of ACE2 activity and cellular morphogenesis (RAM) signaling network. The RAM network is critically required for hyphal growth as well as normal vegetative growth, and for polarization of lipid rafts and the actin cytoskeleton. It play an essential role in biofilm formation. The RAM network also plays a role in serum- and antifungal azoles-induced activation of ergosterol biosynthesis genes, especially those involved in the late steps of ergosterol biosynthesis. This chain is CBK1 kinase activator protein MOB2 (MOB2), found in Candida albicans (strain SC5314 / ATCC MYA-2876) (Yeast).